The primary structure comprises 68 residues: Pleurocidin (68 aa).

Positions 1-22 are cleaved as a signal peptide; sequence MKFTATFLMIAIFVLMVEPGEC. The propeptide occupies 48–68; sequence GDKQELNKRAVDEDPNVIVFE.

Belongs to the pleurocidin family. As to expression, goblet cells.

The protein resides in the secreted. Its function is as follows. Antimicrobial peptide with potent activity against Gram-positive and Gram-negative bacteria. Activity against E.coli and B.subtilis. Weaker activity against L.mucor, s.marcescens and P.aeruginosa. May play a role in innate host defense. The sequence is that of Pleurocidin (ple2) from Pseudopleuronectes americanus (Winter flounder).